The chain runs to 164 residues: Superoxide dismutase [Cu-Zn] 3 (164 aa).

Residues His-51, His-53, and His-68 each coordinate Cu cation. Cysteines 62 and 151 form a disulfide. Zn(2+) is bound by residues His-68, His-76, His-85, and Asp-88. His-125 is a Cu cation binding site. The Peroxisome localization signal signature appears at 162–164 (AKL).

Belongs to the Cu-Zn superoxide dismutase family. In terms of assembly, homodimer. Cu cation serves as cofactor. It depends on Zn(2+) as a cofactor. As to expression, expressed in leaves (at protein level).

It is found in the peroxisome. It catalyses the reaction 2 superoxide + 2 H(+) = H2O2 + O2. In terms of biological role, destroys radicals which are normally produced within the cells and which are toxic to biological systems. This is Superoxide dismutase [Cu-Zn] 3 (CSD3) from Arabidopsis thaliana (Mouse-ear cress).